The chain runs to 116 residues: Large ribosomal subunit protein uL18 (116 aa).

This sequence belongs to the universal ribosomal protein uL18 family. In terms of assembly, part of the 50S ribosomal subunit; part of the 5S rRNA/L5/L18/L25 subcomplex. Contacts the 5S and 23S rRNAs.

Functionally, this is one of the proteins that bind and probably mediate the attachment of the 5S RNA into the large ribosomal subunit, where it forms part of the central protuberance. This chain is Large ribosomal subunit protein uL18, found in Pseudomonas aeruginosa (strain UCBPP-PA14).